We begin with the raw amino-acid sequence, 218 residues long: Small ribosomal subunit protein uS3c (218 aa).

The 72-residue stretch at 47-118 (IQKTIKISSG…KLNIAITRIA (72 aa)) folds into the KH type-2 domain.

Belongs to the universal ribosomal protein uS3 family. Part of the 30S ribosomal subunit.

Its subcellular location is the plastid. It localises to the chloroplast. This chain is Small ribosomal subunit protein uS3c (rps3), found in Lotus japonicus (Lotus corniculatus var. japonicus).